Reading from the N-terminus, the 290-residue chain is Nucleotide-binding protein BPP4038 (290 aa).

Position 9–16 (Gly-9–Ser-16) interacts with ATP. Asp-58–Ser-61 is a GTP binding site.

Belongs to the RapZ-like family.

In terms of biological role, displays ATPase and GTPase activities. This Bordetella parapertussis (strain 12822 / ATCC BAA-587 / NCTC 13253) protein is Nucleotide-binding protein BPP4038.